A 59-amino-acid polypeptide reads, in one-letter code: Large ribosomal subunit protein uL30 (59 aa).

It belongs to the universal ribosomal protein uL30 family. In terms of assembly, part of the 50S ribosomal subunit.

This chain is Large ribosomal subunit protein uL30, found in Geobacter metallireducens (strain ATCC 53774 / DSM 7210 / GS-15).